The sequence spans 270 residues: Glutamate racemase (270 aa).

Residues 15-16 (DS) and 47-48 (YG) contribute to the substrate site. The active-site Proton donor/acceptor is the cysteine 78. Residue 79–80 (NT) participates in substrate binding. Residue cysteine 189 is the Proton donor/acceptor of the active site. 190–191 (TH) is a binding site for substrate.

This sequence belongs to the aspartate/glutamate racemases family.

The enzyme catalyses L-glutamate = D-glutamate. It functions in the pathway cell wall biogenesis; peptidoglycan biosynthesis. In terms of biological role, provides the (R)-glutamate required for cell wall biosynthesis. In Syntrophus aciditrophicus (strain SB), this protein is Glutamate racemase.